The chain runs to 567 residues: Monodechloroaminopyrrolnitrin halogenase PrnC (567 aa).

The protein operates within antibiotic biosynthesis. In terms of biological role, involved in the biosynthesis of the antifungal antibiotic pyrrolnitrin. Catalyzes the chlorination of monodechloroaminopyrrolnitrin (MDA) at the 3 position to form aminopyrrolnitrin (APRN). The polypeptide is Monodechloroaminopyrrolnitrin halogenase PrnC (prnC) (Pseudomonas fluorescens).